The following is a 503-amino-acid chain: Glycerol kinase (503 aa).

Thr-12 is an ADP binding site. Positions 12, 13, and 14 each coordinate ATP. Sn-glycerol 3-phosphate is bound at residue Thr-12. Arg-16 is a binding site for ADP. Arg-82, Glu-83, Tyr-134, and Asp-243 together coordinate sn-glycerol 3-phosphate. The glycerol site is built by Arg-82, Glu-83, Tyr-134, Asp-243, and Gln-244. ADP is bound by residues Thr-265 and Gly-308. ATP contacts are provided by Thr-265, Gly-308, Gln-312, and Gly-412. Position 412 (Gly-412) interacts with ADP.

This sequence belongs to the FGGY kinase family.

It carries out the reaction glycerol + ATP = sn-glycerol 3-phosphate + ADP + H(+). It functions in the pathway polyol metabolism; glycerol degradation via glycerol kinase pathway; sn-glycerol 3-phosphate from glycerol: step 1/1. Inhibited by fructose 1,6-bisphosphate (FBP). Its function is as follows. Key enzyme in the regulation of glycerol uptake and metabolism. Catalyzes the phosphorylation of glycerol to yield sn-glycerol 3-phosphate. This chain is Glycerol kinase, found in Nitrobacter hamburgensis (strain DSM 10229 / NCIMB 13809 / X14).